A 254-amino-acid polypeptide reads, in one-letter code: Aspartate/glutamate leucyltransferase (254 aa).

This sequence belongs to the R-transferase family. Bpt subfamily.

It localises to the cytoplasm. It carries out the reaction N-terminal L-glutamyl-[protein] + L-leucyl-tRNA(Leu) = N-terminal L-leucyl-L-glutamyl-[protein] + tRNA(Leu) + H(+). The enzyme catalyses N-terminal L-aspartyl-[protein] + L-leucyl-tRNA(Leu) = N-terminal L-leucyl-L-aspartyl-[protein] + tRNA(Leu) + H(+). In terms of biological role, functions in the N-end rule pathway of protein degradation where it conjugates Leu from its aminoacyl-tRNA to the N-termini of proteins containing an N-terminal aspartate or glutamate. The protein is Aspartate/glutamate leucyltransferase of Xylella fastidiosa (strain M23).